A 151-amino-acid polypeptide reads, in one-letter code: Large ribosomal subunit protein bL9 (151 aa).

Belongs to the bacterial ribosomal protein bL9 family.

Its function is as follows. Binds to the 23S rRNA. The chain is Large ribosomal subunit protein bL9 from Pelobacter propionicus (strain DSM 2379 / NBRC 103807 / OttBd1).